A 401-amino-acid chain; its full sequence is Secreted LysM effector Blys8 (401 aa).

Positions Met-1–Pro-19 are cleaved as a signal peptide. Residues Thr-42–Val-89 enclose the LysM 1 domain. A compositionally biased stretch (low complexity) spans Ser-98–Thr-136. The disordered stretch occupies residues Ser-98–Gln-137. The LysM 2 domain occupies Ala-146–Val-193. The interval Ser-201–Thr-223 is disordered. Residues Gln-233–Val-279 form the LysM 3 domain.

This sequence belongs to the secreted LysM effector family.

Might have a role in sequestration of chitin oligosaccharides (breakdown products of fungal cell walls that are released during invasion and act as triggers of host immunity) to dampen host defense. The chain is Secreted LysM effector Blys8 from Beauveria bassiana (strain ARSEF 2860) (White muscardine disease fungus).